A 232-amino-acid polypeptide reads, in one-letter code: PsbP domain-containing protein 2, chloroplastic (232 aa).

The N-terminal 34 residues, 1-34, are a transit peptide targeting the chloroplast; the sequence is MWSQSFLGSAPKLCLFSSSLPPFSHHKIHKFFCF. A thylakoid-targeting transit peptide spans 35 to 71; sequence AQNPSSTVSINLSKRHLNLSILTLFFNGFLLDNKAKS.

It belongs to the PsbP family.

It localises to the plastid. The protein resides in the chloroplast thylakoid lumen. In Arabidopsis thaliana (Mouse-ear cress), this protein is PsbP domain-containing protein 2, chloroplastic (PPD2).